The primary structure comprises 564 residues: Rhotekin (564 aa).

Residue R14 is modified to Omega-N-methylarginine. Residues 17–98 (ALEMEFKRGR…LQRRKEAQVL (82 aa)) enclose the REM-1 domain. 2 positions are modified to phosphoserine: S30 and S106. R230 is subject to Asymmetric dimethylarginine. S232 carries the post-translational modification Phosphoserine. In terms of domain architecture, PH spans 309-416 (QPTASGALRV…WMEALWQLFF (108 aa)). The tract at residues 518 to 564 (TFSLDAAPADHSLGPSRSVAPLPPQRSPKSRGFYSKSQLGPWLQSPV) is disordered. A phosphoserine mark is found at S520, S529, and S544.

Interacts via its C-terminal region with the TAX1BP3 PDZ domain. This interaction facilitates Rho-mediated activation of the c-Fos serum response element (SRE). Interacts with SEPT9. Specifically binds to GTP-bound RHOA, RHOB and RHOC and inhibits their GTPase activity. In terms of tissue distribution, abundantly expressed in brain and kidney. Weakly expressed in lung, testis, skeletal muscle, heart and thymus.

Its function is as follows. Mediates Rho signaling to activate NF-kappa-B and may confer increased resistance to apoptosis to cells in gastric tumorigenesis. May play a novel role in the organization of septin structures. This chain is Rhotekin, found in Mus musculus (Mouse).